Reading from the N-terminus, the 1013-residue chain is Tolloid-like protein 1 (1013 aa).

The first 30 residues, 1-30 (MGLQALSPRMLLWLVVSGIVFSRVLWVCAG), serve as a signal peptide directing secretion. Positions 31–147 (LDYDYTFDGN…EQSEKNRVPR (117 aa)) are excised as a propeptide. A disordered region spans residues 124-150 (QNNTMKGKAPPKLSEQSEKNRVPRAAT). Positions 148 to 347 (AATSRTERIW…AQARKLYRCP (200 aa)) constitute a Peptidase M12A domain. N-linked (GlcNAc...) asparagine glycosylation is present at Asn-169. Disulfide bonds link Cys-190-Cys-346, Cys-210-Cys-232, Cys-212-Cys-213, and Cys-349-Cys-375. Residue His-240 coordinates Zn(2+). The active site involves Glu-241. The Zn(2+) site is built by His-244 and His-250. 2 consecutive CUB domains span residues 349 to 461 (CGET…YEAI) and 462 to 574 (CGGE…FFKE). Asn-359 and Asn-390 each carry an N-linked (GlcNAc...) asparagine glycan. 15 disulfide bridges follow: Cys-402/Cys-424, Cys-462/Cys-488, Cys-515/Cys-537, Cys-578/Cys-590, Cys-586/Cys-599, Cys-601/Cys-614, Cys-618/Cys-644, Cys-671/Cys-693, Cys-734/Cys-745, Cys-741/Cys-754, Cys-756/Cys-769, Cys-774/Cys-800, Cys-827/Cys-849, Cys-887/Cys-917, and Cys-944/Cys-966. The region spanning 574–615 (EEDECAKPDRGGCEQRCLNTLGSYQCACEPGYELGPDRRSCE) is the EGF-like 1; calcium-binding domain. Residues 618 to 730 (CGGLLTKLNG…KGFKAHFFSD (113 aa)) enclose the CUB 3 domain. Asn-626 is a glycosylation site (N-linked (GlcNAc...) asparagine). Residues 730 to 770 (DKDECSKDNGGCQHECVNTMGSYTCQCRNGFVLHENKHDCK) form the EGF-like 2; calcium-binding domain. 2 consecutive CUB domains span residues 774 to 886 (CEQK…HSTE) and 887 to 1003 (CGGR…YKSI).

Zn(2+) serves as cofactor. As to expression, highly expressed in brain and kidney and weakly in lung, skeletal muscle. A perceptible level of expression is observed in heart and testis.

It localises to the secreted. Functionally, protease which processes procollagen C-propeptides, such as chordin, pro-biglycan and pro-lysyl oxidase. Required for the embryonic development, especially heart development. Predominant protease, which in the development, influences dorsal-ventral patterning and skeletogenesis. The protein is Tolloid-like protein 1 (Tll1) of Mus musculus (Mouse).